Here is a 154-residue protein sequence, read N- to C-terminus: Nuclear cap-binding protein subunit 2 (154 aa).

MRNA contacts are provided by residues Tyr-10, Tyr-33, 102–106 (RVDWD), 113–117 (RQYGR), and 123–124 (QV). The RRM domain maps to 30–108 (CTLYVGNLSF…RLIRVDWDAG (79 aa)).

This sequence belongs to the RRM NCBP2 family. Component of the nuclear cap-binding complex (CBC), a heterodimer composed of Cbp80 and Cbp20 that interacts with m7GpppG-capped RNA. Interacts with Ars2.

It localises to the nucleus. Its function is as follows. Component of the cap-binding complex (CBC), which binds co-transcriptionally to the 5' cap of pre-mRNAs and is involved in various processes such as pre-mRNA splicing and RNA-mediated gene silencing (RNAi). The CBC complex is involved in miRNA-mediated RNA interference via its interaction with Ars2 and is required for primary microRNAs (miRNAs) processing. Also involved in innate immunity via the short interfering RNAs (siRNAs) processing machinery by restricting the viral RNA production. In the CBC complex, Cbp20 recognizes and binds capped RNAs (m7GpppG-capped RNA) but requires Cbp80 to stabilize the movement of its N-terminal loop and lock the CBC into a high affinity cap-binding state with the cap structure. The chain is Nuclear cap-binding protein subunit 2 (Cbp20) from Drosophila yakuba (Fruit fly).